Here is a 552-residue protein sequence, read N- to C-terminus: Hydroxylamine reductase (552 aa).

[4Fe-4S] cluster contacts are provided by Cys-3, Cys-6, Cys-15, and Cys-21. Hybrid [4Fe-2O-2S] cluster is bound by residues His-247, Glu-271, Cys-315, Cys-407, Cys-435, Cys-460, Glu-495, and Lys-497. Residue Cys-407 is modified to Cysteine persulfide.

Belongs to the HCP family. [4Fe-4S] cluster serves as cofactor. Hybrid [4Fe-2O-2S] cluster is required as a cofactor.

The protein resides in the cytoplasm. The enzyme catalyses A + NH4(+) + H2O = hydroxylamine + AH2 + H(+). Its function is as follows. Catalyzes the reduction of hydroxylamine to form NH(3) and H(2)O. The protein is Hydroxylamine reductase of Thermosipho melanesiensis (strain DSM 12029 / CIP 104789 / BI429).